Here is a 124-residue protein sequence, read N- to C-terminus: Large ribosomal subunit protein uL18 (124 aa).

The protein belongs to the universal ribosomal protein uL18 family. As to quaternary structure, part of the 50S ribosomal subunit; part of the 5S rRNA/L5/L18/L25 subcomplex. Contacts the 5S and 23S rRNAs.

In terms of biological role, this is one of the proteins that bind and probably mediate the attachment of the 5S RNA into the large ribosomal subunit, where it forms part of the central protuberance. This Koribacter versatilis (strain Ellin345) protein is Large ribosomal subunit protein uL18.